An 89-amino-acid polypeptide reads, in one-letter code: Probable Fe(2+)-trafficking protein (89 aa).

It belongs to the Fe(2+)-trafficking protein family.

Could be a mediator in iron transactions between iron acquisition and iron-requiring processes, such as synthesis and/or repair of Fe-S clusters in biosynthetic enzymes. This chain is Probable Fe(2+)-trafficking protein, found in Acinetobacter baumannii (strain SDF).